Consider the following 95-residue polypeptide: Acylphosphatase (95 aa).

The Acylphosphatase-like domain maps to 8–95; that stretch reads RAKILVRGKV…GNFRTFEIKK (88 aa). Residues Arg-23 and Asn-41 contribute to the active site.

Belongs to the acylphosphatase family.

The enzyme catalyses an acyl phosphate + H2O = a carboxylate + phosphate + H(+). This is Acylphosphatase (acyP) from Leptospira interrogans serogroup Icterohaemorrhagiae serovar copenhageni (strain Fiocruz L1-130).